A 774-amino-acid polypeptide reads, in one-letter code: Lysyl oxidase homolog 2 (774 aa).

An N-terminal signal peptide occupies residues 1-25 (MERPLCSHLCSCLAMLALLSPLSLA). 4 SRCR domains span residues 58–159 (LRLA…VVCS), 188–302 (IRAI…VSCV), 326–425 (VRLR…VRCN), and 435–544 (LRLN…VACS). Cystine bridges form between cysteine 84/cysteine 148, cysteine 97/cysteine 158, cysteine 128/cysteine 138, cysteine 218/cysteine 291, cysteine 231/cysteine 301, cysteine 265/cysteine 275, cysteine 351/cysteine 414, cysteine 364/cysteine 424, and cysteine 395/cysteine 405. N-linked (GlcNAc...) asparagine glycosylation occurs at asparagine 288. Asparagine 455 carries N-linked (GlcNAc...) (complex) asparagine glycosylation. 3 cysteine pairs are disulfide-bonded: cysteine 464–cysteine 530, cysteine 477–cysteine 543, and cysteine 511–cysteine 521. The tract at residues 548–751 (PDLVLNAEMV…WMYNCHIGGS (204 aa)) is lysyl-oxidase like. Aspartate 549 and leucine 550 together coordinate Ca(2+). Cystine bridges form between cysteine 573–cysteine 625, cysteine 579–cysteine 695, cysteine 657–cysteine 673, and cysteine 663–cysteine 685. Cu cation contacts are provided by histidine 626, histidine 628, and histidine 630. N-linked (GlcNAc...) (complex) asparagine glycosylation occurs at asparagine 644. A cross-link (lysine tyrosylquinone (Lys-Tyr)) is located at residues 653–689 (KASFCLEDTECEGDIQKNYECANFGDQGITMGCWDMY). Position 689 is a 2',4',5'-topaquinone (tyrosine 689). Ca(2+) is bound by residues glutamate 722, aspartate 724, asparagine 727, and asparagine 728. A disulfide bridge connects residues cysteine 732 and cysteine 746.

Belongs to the lysyl oxidase family. In terms of assembly, component of some chromatin repressor complex. Interacts with SNAI1. Interacts with TAF10. Interacts with HSPA5. Interacts with EFEMP2. Cu cation is required as a cofactor. Lysine tyrosylquinone residue serves as cofactor. In terms of processing, the lysine tyrosylquinone cross-link (LTQ) is generated by condensation of the epsilon-amino group of a lysine with a topaquinone produced by oxidation of tyrosine. N-glycosylated. N-glycosylation on Asn-455 and Asn-644 may be essential for proper folding and secretion; may be composed of a fucosylated carbohydrates attached to a trimannose N-linked glycan core. In terms of tissue distribution, expressed in many tissues. Highest expression in reproductive tissues, placenta, uterus and prostate. In esophageal epithelium, expressed in the basal, prickle and granular cell layers. Up-regulated in a number of cancers cells and tissues.

The protein localises to the secreted. It localises to the extracellular space. It is found in the extracellular matrix. Its subcellular location is the basement membrane. The protein resides in the nucleus. The protein localises to the chromosome. It localises to the endoplasmic reticulum. The catalysed reaction is L-lysyl-[protein] + O2 + H2O = (S)-2-amino-6-oxohexanoyl-[protein] + H2O2 + NH4(+). Its activity is regulated as follows. According to some reports, it is inhibited by beta-aminopropionitrile (BAPN). According to another report, it is not inhibited by beta-aminopropionitrile (BAPN). Specifically inhibited by a mouse monoclonal antibody AB0023, inhibition occurs in a non-competitive manner. In terms of biological role, mediates the post-translational oxidative deamination of lysine residues on target proteins leading to the formation of deaminated lysine (allysine). Acts as a transcription corepressor and specifically mediates deamination of trimethylated 'Lys-4' of histone H3 (H3K4me3), a specific tag for epigenetic transcriptional activation. Shows no activity against histone H3 when it is trimethylated on 'Lys-9' (H3K9me3) or 'Lys-27' (H3K27me3) or when 'Lys-4' is monomethylated (H3K4me1) or dimethylated (H3K4me2). Also mediates deamination of methylated TAF10, a member of the transcription factor IID (TFIID) complex, which induces release of TAF10 from promoters, leading to inhibition of TFIID-dependent transcription. LOXL2-mediated deamination of TAF10 results in transcriptional repression of genes required for embryonic stem cell pluripotency including POU5F1/OCT4, NANOG, KLF4 and SOX2. Involved in epithelial to mesenchymal transition (EMT) via interaction with SNAI1 and participates in repression of E-cadherin CDH1, probably by mediating deamination of histone H3. During EMT, involved with SNAI1 in negatively regulating pericentromeric heterochromatin transcription. SNAI1 recruits LOXL2 to pericentromeric regions to oxidize histone H3 and repress transcription which leads to release of heterochromatin component CBX5/HP1A, enabling chromatin reorganization and acquisition of mesenchymal traits. Interacts with the endoplasmic reticulum protein HSPA5 which activates the IRE1-XBP1 pathway of the unfolded protein response, leading to expression of several transcription factors involved in EMT and subsequent EMT induction. Involved in E-cadherin repression following hypoxia, a hallmark of EMT believed to amplify tumor aggressiveness, suggesting that it may play a role in tumor progression. When secreted into the extracellular matrix, promotes cross-linking of extracellular matrix proteins by mediating oxidative deamination of peptidyl lysine residues in precursors to fibrous collagen and elastin. Acts as a regulator of sprouting angiogenesis, probably via collagen IV scaffolding. Acts as a regulator of chondrocyte differentiation, probably by regulating expression of factors that control chondrocyte differentiation. In Homo sapiens (Human), this protein is Lysyl oxidase homolog 2 (LOXL2).